Here is a 492-residue protein sequence, read N- to C-terminus: Cysteine--tRNA ligase (492 aa).

Zn(2+) is bound at residue Cys-31. A 'HIGH' region motif is present at residues Pro-33 to His-43. Zn(2+) is bound by residues Cys-226, His-251, and Glu-255. Residues Lys-283–Ser-287 carry the 'KMSKS' region motif. Lys-286 contacts ATP.

The protein belongs to the class-I aminoacyl-tRNA synthetase family. As to quaternary structure, monomer. Zn(2+) serves as cofactor.

It is found in the cytoplasm. It catalyses the reaction tRNA(Cys) + L-cysteine + ATP = L-cysteinyl-tRNA(Cys) + AMP + diphosphate. The polypeptide is Cysteine--tRNA ligase (Azobacteroides pseudotrichonymphae genomovar. CFP2).